The sequence spans 177 residues: Disulfide bond formation protein B (177 aa).

The Cytoplasmic portion of the chain corresponds to 1 to 14 (MLIFFKNLSMKRST). A helical transmembrane segment spans residues 15 to 31 (WILLFISALVLESTALY). Over 32–49 (FQHGMGLNPCVMCIYERV) the chain is Periplasmic. Cys-41 and Cys-44 are disulfide-bonded. A helical membrane pass occupies residues 50–65 (AILGILFSGLIGCIAP). At 66–72 (KWLVLRI) the chain is on the cytoplasmic side. A helical membrane pass occupies residues 73 to 90 (LALLIGLGSAVKGLLLAI). At 91–145 (KHLDYQINVYPWNQCAMVPDFPQTLPLDKWFPNIFMPSGSCSDITWSFLGFSMVQ) the chain is on the periplasmic side. Cysteines 105 and 131 form a disulfide. Residues 146-164 (WIIVIFACYFLFFIILSIS) form a helical membrane-spanning segment. The Cytoplasmic portion of the chain corresponds to 165–177 (QFKKVRKNRMLFR).

It belongs to the DsbB family.

The protein resides in the cell inner membrane. Functionally, required for disulfide bond formation in some periplasmic proteins. Acts by oxidizing the DsbA protein. The sequence is that of Disulfide bond formation protein B from Histophilus somni (strain 129Pt) (Haemophilus somnus).